We begin with the raw amino-acid sequence, 347 residues long: Phenylalanine--tRNA ligase alpha subunit (347 aa).

Glutamate 261 provides a ligand contact to Mg(2+).

It belongs to the class-II aminoacyl-tRNA synthetase family. Phe-tRNA synthetase alpha subunit type 1 subfamily. In terms of assembly, tetramer of two alpha and two beta subunits. Requires Mg(2+) as cofactor.

The protein localises to the cytoplasm. The enzyme catalyses tRNA(Phe) + L-phenylalanine + ATP = L-phenylalanyl-tRNA(Phe) + AMP + diphosphate + H(+). The chain is Phenylalanine--tRNA ligase alpha subunit from Streptococcus uberis (strain ATCC BAA-854 / 0140J).